Here is a 715-residue protein sequence, read N- to C-terminus: Protein psiH (715 aa).

The signal sequence occupies residues 1–20; sequence MNYLKPTIFLILCLVTFVYS. Residues 21 to 651 are Extracellular-facing; it reads QPSTLTIQGT…ICKTGAVVST (631 aa). The PA14 domain occupies 115–256; the sequence is NYDSKKQVYV…YDYCGVCSGD (142 aa). Asparagine 149, asparagine 377, asparagine 528, and asparagine 622 each carry an N-linked (GlcNAc...) asparagine glycan. The helical transmembrane segment at 652–672 threads the bilayer; that stretch reads AVIAGVTVAGAVALGVFIYGG. At 673–715 the chain is on the cytoplasmic side; the sequence is KRGYDYWKESRNVQFSGSNSNPLYEQNPNGSGVNPLYNDNSAL. Positions 690 to 715 are disordered; the sequence is SNSNPLYEQNPNGSGVNPLYNDNSAL.

The protein belongs to the prespore-cell-inducing factor family.

It localises to the membrane. The sequence is that of Protein psiH (psiH) from Dictyostelium discoideum (Social amoeba).